The sequence spans 709 residues: Leucine-rich repeat-containing protein 4B (709 aa).

Residues 1–38 (MAQAHIQGSPCPLLPPGRMSWPQGALLLLWLFSPPLRA) form the signal peptide. Residues 50 to 88 (GGGSPPATSCPAACSCSNQASRVICTRRELAEVPASIPV) enclose the LRRNT domain. 9 LRR repeats span residues 89–110 (NTRYLNLQENSIQVIRTDTFKH), 113–134 (HLEILQLSKNLVRKIEVGAFNG), 137–158 (SLNTLELFDNRLTTVPTQAFEY), 161–182 (KLRELWLRNNPIESIPSYAFNR), 185–207 (SLRRLDLGELKRLEYISEAAFEG), 210–231 (NLRYLNLGMCNLKDIPNLTALV), 232–253 (RLEELELSGNRLDLIRPGSFQG), 256–277 (SLRKLWLMHAQVATIERNAFDD), and 280–301 (SLEELNLSHNNLMSLPHDLFTP). In terms of domain architecture, LRRCT spans 313–365 (NPWHCNCDVLWLSWWLKETVPSNTTCCARCHAPAGLKGRYIGELDQSHFTCYA). The 89-residue stretch at 366 to 454 (PVIVEPPTDL…GNTTASATLN (89 aa)) folds into the Ig-like C2-type domain. Residues Asn-376, Asn-402, Asn-424, Asn-427, and Asn-446 are each glycosylated (N-linked (GlcNAc...) asparagine). Cys-387 and Cys-438 are joined by a disulfide. The tract at residues 496–552 (TQPGEEAQQPRGTEKEPPGPTTDGAWGGGRPDAAAPASASTTAPAPRSSRPTEKAFT) is disordered. The span at 528–544 (AAAPASASTTAPAPRSS) shows a compositional bias: low complexity. Residues 575–595 (IIIGCFVAITFMAAVMLVAFY) form a helical membrane-spanning segment. Phosphoserine is present on Ser-689.

In terms of assembly, interacts with PTPRF. Interacts with DLG4. N-glycosylated. O-glycosylated; contains sialic acid. Mainly expressed in the brain. Widespread distribution in various brain regions (at protein level). Detected both embryonically and postnatally with stronger expression in postnatal stages.

The protein resides in the membrane. It localises to the presynaptic cell membrane. In terms of biological role, synaptic adhesion protein. Regulates the formation of excitatory synapses. The trans-synaptic adhesion between LRRC4B and PTPRF regulates the formation of excitatory synapses in a bidirectional manner. This is Leucine-rich repeat-containing protein 4B (Lrrc4b) from Rattus norvegicus (Rat).